Consider the following 399-residue polypeptide: 3-methyl-2-oxobutanoate hydroxymethyltransferase 2, mitochondrial (399 aa).

The transit peptide at 1-90 (MSFSRLLTPR…ARRVTLATLR (90 aa)) directs the protein to the mitochondrion. The Mg(2+) site is built by D125 and D164. Residues 125-126 (DS), D164, and K194 each bind 3-methyl-2-oxobutanoate. Mg(2+) is bound at residue E196. The active-site Proton acceptor is E264.

The protein belongs to the PanB family. It depends on Mg(2+) as a cofactor.

It localises to the mitochondrion. The catalysed reaction is 3-methyl-2-oxobutanoate + (6R)-5,10-methylene-5,6,7,8-tetrahydrofolate + H2O = 2-dehydropantoate + (6S)-5,6,7,8-tetrahydrofolate. Its pathway is cofactor biosynthesis; (R)-pantothenate biosynthesis; (R)-pantoate from 3-methyl-2-oxobutanoate: step 1/2. Catalyzes the reversible reaction in which hydroxymethyl group from 5,10-methylenetetrahydrofolate is transferred onto alpha-ketoisovalerate to form ketopantoate. The protein is 3-methyl-2-oxobutanoate hydroxymethyltransferase 2, mitochondrial (KPHMT2) of Oryza sativa subsp. japonica (Rice).